Here is a 672-residue protein sequence, read N- to C-terminus: Glycine--tRNA ligase beta subunit (672 aa).

It belongs to the class-II aminoacyl-tRNA synthetase family. As to quaternary structure, tetramer of two alpha and two beta subunits.

It is found in the cytoplasm. The enzyme catalyses tRNA(Gly) + glycine + ATP = glycyl-tRNA(Gly) + AMP + diphosphate. This Thermotoga maritima (strain ATCC 43589 / DSM 3109 / JCM 10099 / NBRC 100826 / MSB8) protein is Glycine--tRNA ligase beta subunit (glyS).